A 457-amino-acid chain; its full sequence is Serine--tRNA ligase (457 aa).

Residue 252 to 254 (TAE) coordinates L-serine. ATP is bound by residues 283–285 (RKE) and V299. An L-serine-binding site is contributed by E306. 370–373 (EMVS) is an ATP binding site. An L-serine-binding site is contributed by T406.

This sequence belongs to the class-II aminoacyl-tRNA synthetase family. Type-1 seryl-tRNA synthetase subfamily. Homodimer. The tRNA molecule binds across the dimer.

Its subcellular location is the cytoplasm. It catalyses the reaction tRNA(Ser) + L-serine + ATP = L-seryl-tRNA(Ser) + AMP + diphosphate + H(+). It carries out the reaction tRNA(Sec) + L-serine + ATP = L-seryl-tRNA(Sec) + AMP + diphosphate + H(+). It participates in aminoacyl-tRNA biosynthesis; selenocysteinyl-tRNA(Sec) biosynthesis; L-seryl-tRNA(Sec) from L-serine and tRNA(Sec): step 1/1. In terms of biological role, catalyzes the attachment of serine to tRNA(Ser). Is also able to aminoacylate tRNA(Sec) with serine, to form the misacylated tRNA L-seryl-tRNA(Sec), which will be further converted into selenocysteinyl-tRNA(Sec). This Saccharolobus solfataricus (strain ATCC 35092 / DSM 1617 / JCM 11322 / P2) (Sulfolobus solfataricus) protein is Serine--tRNA ligase.